Consider the following 465-residue polypeptide: Endo-1,3-1,4-beta-glycanase EglC (465 aa).

Hemolysin-type calcium-binding repeat units follow at residues 33–50 (YGTAGNDSMWADSSVDVT), 105–122 (FGNSASNIISGGSGSQTI), and 123–140 (NGGAGNDVLTGAGGADTF). A GH16 domain is found at 213 to 462 (LDRSVLTQTF…YVKAYSLDAD (250 aa)). Glutamate 349 serves as the catalytic Nucleophile. Residue glutamate 354 is the Proton donor of the active site.

Belongs to the glycosyl hydrolase 16 family.

Its subcellular location is the secreted. It participates in glycan metabolism; exopolysaccharide biosynthesis. Functionally, cleaves high molecular weight succinoglycan to yield LMW succinoglycan. Dynamically regulates the molecular weight distribution of succinoglycan by cleaving nascent succinoglycan only during a limited period after its synthesis, perhaps before it undergoes a time-dependent change in its conformation or aggregation state. The chain is Endo-1,3-1,4-beta-glycanase EglC (eglC) from Rhizobium meliloti (strain 1021) (Ensifer meliloti).